A 233-amino-acid chain; its full sequence is Ras-related protein RabV (233 aa).

Position 15 to 22 (15 to 22 (GEKEVGKS)) interacts with GTP. An Effector region motif is present at residues 37 to 45 (YIPTIGIDF). GTP-binding positions include 63 to 67 (DYVSH) and 122 to 125 (TKSD). The disordered stretch occupies residues 143-182 (QNNNNNNNNNNNNNNNNNNNNNNNNNNNNNSNNNNNNNLQ). Over residues 144-180 (NNNNNNNNNNNNNNNNNNNNNNNNNNNNNSNNNNNNN) the composition is skewed to low complexity.

The protein belongs to the small GTPase superfamily. Rab family.

This is Ras-related protein RabV (rabV) from Dictyostelium discoideum (Social amoeba).